We begin with the raw amino-acid sequence, 944 residues long: Translation initiation factor IF-2 (944 aa).

Residues 55 to 81 show a composition bias toward low complexity; the sequence is LTGQAAAPAAAPSSAPRPGARSSAPKP. The segment at 55-329 is disordered; it reads LTGQAAAPAA…RTKRAEFELR (275 aa). The segment covering 82-92 has biased composition (pro residues); sequence GGRPTPGPQPT. Residues 93-107 are compositionally biased toward low complexity; the sequence is AAPEVEAPEASDVPV. Basic and acidic residues predominate over residues 123-135; sequence ASRKAAAEEKAQA. Composition is skewed to low complexity over residues 136–153 and 211–222; these read EKSA…ETPS and GQRPAAGAAGPR. Residues 223 to 236 are compositionally biased toward pro residues; that stretch reads PAAPRPGSPRPGAP. Low complexity predominate over residues 244-257; sequence GARPAGFGQRPAGA. The segment covering 258–269 has biased composition (gly residues); sequence GRPGGAPGGAGR. Over residues 270-283 the composition is skewed to low complexity; the sequence is PGAPAAGGFQRPAG. Over residues 284-310 the composition is skewed to gly residues; that stretch reads GFAGRPGGGGRGRGPGGGTAGAFGRGG. Residues 311-322 show a composition bias toward basic residues; it reads GKSKSRKSKRTK. Residues 437–611 form the tr-type G domain; it reads IRPPVVTVMG…LTADAGLDLR (175 aa). The tract at residues 446-453 is G1; sequence GHVDHGKT. A GTP-binding site is contributed by 446 to 453; sequence GHVDHGKT. The G2 stretch occupies residues 471-475; the sequence is GITQH. The segment at 496-499 is G3; that stretch reads DTPG. Residues 496–500 and 550–553 contribute to the GTP site; these read DTPGH and NKVD. Residues 550–553 are G4; that stretch reads NKVD. Residues 586–588 form a G5 region; the sequence is SAL.

It belongs to the TRAFAC class translation factor GTPase superfamily. Classic translation factor GTPase family. IF-2 subfamily.

The protein localises to the cytoplasm. Its function is as follows. One of the essential components for the initiation of protein synthesis. Protects formylmethionyl-tRNA from spontaneous hydrolysis and promotes its binding to the 30S ribosomal subunits. Also involved in the hydrolysis of GTP during the formation of the 70S ribosomal complex. In Clavibacter michiganensis subsp. michiganensis (strain NCPPB 382), this protein is Translation initiation factor IF-2.